The sequence spans 427 residues: Bifunctional enzyme MtnB/MtnX (427 aa).

Positions 1–221 (MRKPLIICDF…LEETAEVKEW (221 aa)) are HK-MTPenyl-1-P phosphatase. The MTRu-1-P dehydratase stretch occupies residues 222–427 (MSEQKRQELA…KLKALQAYHV (206 aa)). Residues His-317 and His-319 each contribute to the Zn(2+) site.

In the N-terminal section; belongs to the HAD-like hydrolase superfamily. MtnX family. The protein in the C-terminal section; belongs to the aldolase class II family. MtnB subfamily. In terms of assembly, homotetramer. The cofactor is Zn(2+).

It carries out the reaction 5-(methylsulfanyl)-D-ribulose 1-phosphate = 5-methylsulfanyl-2,3-dioxopentyl phosphate + H2O. The catalysed reaction is 2-hydroxy-5-methylsulfanyl-3-oxopent-1-enyl phosphate + H2O = 1,2-dihydroxy-5-(methylsulfanyl)pent-1-en-3-one + phosphate. It functions in the pathway amino-acid biosynthesis; L-methionine biosynthesis via salvage pathway; L-methionine from S-methyl-5-thio-alpha-D-ribose 1-phosphate: step 2/6. The protein operates within amino-acid biosynthesis; L-methionine biosynthesis via salvage pathway; L-methionine from S-methyl-5-thio-alpha-D-ribose 1-phosphate: step 4/6. Functionally, catalyzes the dehydration of methylthioribulose-1-phosphate (MTRu-1-P) into 2,3-diketo-5-methylthiopentyl-1-phosphate (DK-MTP-1-P). Its function is as follows. Dephosphorylates 2-hydroxy-3-keto-5-methylthiopentenyl-1-phosphate (HK-MTPenyl-1-P) yielding 1,2-dihydroxy-3-keto-5-methylthiopentene (DHK-MTPene). The polypeptide is Bifunctional enzyme MtnB/MtnX (mtnB/mtnX) (Bacillus licheniformis (strain ATCC 14580 / DSM 13 / JCM 2505 / CCUG 7422 / NBRC 12200 / NCIMB 9375 / NCTC 10341 / NRRL NRS-1264 / Gibson 46)).